The chain runs to 353 residues: Polyprenal reductase 2 (353 aa).

The next 6 membrane-spanning stretches (helical) occupy residues 11–31, 78–98, 175–195, 234–254, 291–308, and 313–335; these read PLLC…ALPI, FMHF…AIWF, MHIV…LSLA, PLLK…WGSL, YLAE…SGAE, and WFLF…NWYL.

It belongs to the steroid 5-alpha reductase family. Polyprenal reductase subfamily.

The protein resides in the cell membrane. The enzyme catalyses a di-trans,poly-cis-dolichal + NADP(+) = a di-trans,poly-cis-polyprenal + NADPH + H(+). It participates in protein modification; protein glycosylation. Its function is as follows. Plays a key role in early steps of protein N-linked glycosylation by being involved in the conversion of polyprenol into dolichol. Acts as a polyprenal reductase that mediates the reduction of polyprenal into dolichal in a NADP-dependent mechanism. Dolichols are required for the synthesis of dolichol-linked monosaccharides and the oligosaccharide precursor used for N-glycosylation. The sequence is that of Polyprenal reductase 2 from Oryza sativa subsp. indica (Rice).